A 1027-amino-acid polypeptide reads, in one-letter code: Kinesin heavy chain isoform 5A (1027 aa).

The residue at position 2 (Ala2) is an N-acetylalanine. Residues 9-327 (SIKVLCRFRP…LMFGQRAKTI (319 aa)) enclose the Kinesin motor domain. An ATP-binding site is contributed by 86–93 (GQTSSGKT). Residues 174–315 (VSSPEEILDV…PSSYNDAETK (142 aa)) are microtubule-binding. Positions 271–361 (EGTKSYVPYR…KTKAQKETIA (91 aa)) are necessary for interaction with ZFYVE27. Positions 331-906 (ASVNLELTAE…VDRIKEAVRY (576 aa)) form a coiled coil. An interaction with BICD2 region spans residues 353–1027 (TKAQKETIAK…FPLHQETAAS (675 aa)). The residue at position 397 (Thr397) is a Phosphothreonine. Positions 906–937 (YKSSGKRGHSAQIAKPVRPGHYPASSPTNPYG) are disordered. The tract at residues 907-1027 (KSSGKRGHSA…FPLHQETAAS (121 aa)) is globular.

Belongs to the TRAFAC class myosin-kinesin ATPase superfamily. Kinesin family. Kinesin subfamily. In terms of assembly, oligomer composed of two heavy chains and two light chains. Interacts with GRIP1. Interacts with FMR1 (via C-terminus); this interaction is increased in a mGluR-dependent manner. Interacts with BORCS5. Interacts with ZFYVE27. Interacts with VAPA, VAPB, SURF4, RAB11A (GDP-bound form), RAB11B (GDP-bound form) and RTN3 in a ZFYVE27-dependent manner. Interacts with BICD2. Interacts with DTNB.

The protein resides in the cytoplasm. It is found in the perinuclear region. It localises to the cytoskeleton. Its subcellular location is the perikaryon. It carries out the reaction ATP + H2O + a kinesin associated with a microtubule at position (n) = ADP + phosphate a kinesin associated with a microtubule at position (n+1, toward the plus end).. In terms of biological role, microtubule-dependent motor required for slow axonal transport of neurofilament proteins (NFH, NFM and NFL). Can induce formation of neurite-like membrane protrusions in non-neuronal cells in a ZFYVE27-dependent manner. The ZFYVE27-KIF5A complex contributes to the vesicular transport of VAPA, VAPB, SURF4, RAB11A, RAB11B and RTN3 proteins in neurons. Required for anterograde axonal transportation of MAPK8IP3/JIP3 which is essential for MAPK8IP3/JIP3 function in axon elongation. The protein is Kinesin heavy chain isoform 5A (Kif5a) of Mus musculus (Mouse).